Reading from the N-terminus, the 76-residue chain is MKDNFTRLQSIVGKQLGIDPSKVKLESDFGRELGADSLDVVELVMAIEDEFEVNIEDQSASQIATVQDVLNYLERN.

The Carrier domain maps to 2–76 (KDNFTRLQSI…QDVLNYLERN (75 aa)). Position 37 is an O-(pantetheine 4'-phosphoryl)serine (serine 37).

It belongs to the acyl carrier protein (ACP) family. Post-translationally, 4'-phosphopantetheine is transferred from CoA to a specific serine of apo-ACP by AcpS. This modification is essential for activity because fatty acids are bound in thioester linkage to the sulfhydryl of the prosthetic group.

The protein localises to the plastid. It localises to the chloroplast. Its pathway is lipid metabolism; fatty acid biosynthesis. Carrier of the growing fatty acid chain in fatty acid biosynthesis. This chain is Acyl carrier protein, found in Phaeodactylum tricornutum (strain CCAP 1055/1).